A 372-amino-acid polypeptide reads, in one-letter code: Serine protease 44 (372 aa).

Positions 1–25 (MAFQGCDCFGLLVWLLLLQTRLGKA) are cleaved as a signal peptide. At 26-351 (RMVPGTPSLS…KELSRASCWK (326 aa)) the chain is on the extracellular side. The interval 31 to 72 (TPSLSPLPSENGLDDSGVNPQERPLTGMPETSLPRKPGDSTR) is disordered. The 234-residue stretch at 112-345 (IVGGRPAPAR…YRDWIIKELS (234 aa)) folds into the Peptidase S1 domain. A disulfide bridge links cysteine 137 with cysteine 153. Catalysis depends on charge relay system residues histidine 152 and aspartate 197. Asparagine 208 carries an N-linked (GlcNAc...) asparagine glycan. 3 cysteine pairs are disulfide-bonded: cysteine 231–cysteine 303, cysteine 262–cysteine 283, and cysteine 293–cysteine 321. Serine 297 serves as the catalytic Charge relay system. Residues 352-372 (LSGFLVLSVCLVLHLAIVVAL) form a helical membrane-spanning segment.

The protein belongs to the peptidase S1 family. As to expression, testis-specific. Expressed by primary and secondary spermatocytes.

The protein resides in the membrane. It is found in the cytoplasm. Its function is as follows. Lacks protease activity in vitro. This chain is Serine protease 44, found in Mus musculus (Mouse).